The chain runs to 281 residues: Bifunctional protein FolD (281 aa).

Residues 165 to 167, Thr192, and Val233 contribute to the NADP(+) site; that span reads GRG.

The protein belongs to the tetrahydrofolate dehydrogenase/cyclohydrolase family. As to quaternary structure, homodimer.

The catalysed reaction is (6R)-5,10-methylene-5,6,7,8-tetrahydrofolate + NADP(+) = (6R)-5,10-methenyltetrahydrofolate + NADPH. It catalyses the reaction (6R)-5,10-methenyltetrahydrofolate + H2O = (6R)-10-formyltetrahydrofolate + H(+). Its pathway is one-carbon metabolism; tetrahydrofolate interconversion. Catalyzes the oxidation of 5,10-methylenetetrahydrofolate to 5,10-methenyltetrahydrofolate and then the hydrolysis of 5,10-methenyltetrahydrofolate to 10-formyltetrahydrofolate. This chain is Bifunctional protein FolD, found in Mycolicibacterium paratuberculosis (strain ATCC BAA-968 / K-10) (Mycobacterium paratuberculosis).